Here is a 332-residue protein sequence, read N- to C-terminus: uncharacterized protein (332 aa).

Residues Met1–Gly26 form the signal peptide.

The protein localises to the endoplasmic reticulum. This is an uncharacterized protein from Schizosaccharomyces pombe (strain 972 / ATCC 24843) (Fission yeast).